A 388-amino-acid polypeptide reads, in one-letter code: Chitinase 4 (388 aa).

Residues F22–V375 enclose the GH18 domain. N-linked (GlcNAc...) asparagine glycans are attached at residues N30 and N82. Chitin-binding positions include N82 to Q83 and G109 to G112. 2 N-linked (GlcNAc...) asparagine glycosylation sites follow: N123 and N132. E151 acts as the Proton donor in catalysis. Chitin is bound at residue Y152. N155 carries an N-linked (GlcNAc...) asparagine glycan. M208 to D211 is a binding site for chitin. N237 is a glycosylation site (N-linked (GlcNAc...) asparagine). Chitin is bound at residue W350.

This sequence belongs to the glycosyl hydrolase 18 family. Chitinase class V subfamily.

Its subcellular location is the secreted. It carries out the reaction Random endo-hydrolysis of N-acetyl-beta-D-glucosaminide (1-&gt;4)-beta-linkages in chitin and chitodextrins.. Functionally, chitinase involved in the remodeling of chitin in the fungal cell wall. Plays a role in sporulation. The protein is Chitinase 4 (CHT4) of Candida albicans (strain SC5314 / ATCC MYA-2876) (Yeast).